A 535-amino-acid chain; its full sequence is 4-hydroxy-3-methylbut-2-enyl diphosphate reductase, apicoplast (535 aa).

Cysteine 231 contributes to the [4Fe-4S] cluster binding site. (2E)-4-hydroxy-3-methylbut-2-enyl diphosphate-binding residues include histidine 260 and histidine 293. Dimethylallyl diphosphate is bound by residues histidine 260 and histidine 293. Positions 260 and 293 each coordinate isopentenyl diphosphate. Cysteine 315 provides a ligand contact to [4Fe-4S] cluster. (2E)-4-hydroxy-3-methylbut-2-enyl diphosphate is bound at residue histidine 343. Histidine 343 is a binding site for dimethylallyl diphosphate. An isopentenyl diphosphate-binding site is contributed by histidine 343. The active-site Proton donor is the glutamate 345. Threonine 383 serves as a coordination point for (2E)-4-hydroxy-3-methylbut-2-enyl diphosphate. Residue cysteine 413 coordinates [4Fe-4S] cluster. (2E)-4-hydroxy-3-methylbut-2-enyl diphosphate is bound by residues serine 441, serine 442, asparagine 443, and serine 485. Dimethylallyl diphosphate contacts are provided by serine 441, serine 442, asparagine 443, and serine 485. Isopentenyl diphosphate-binding residues include serine 441, serine 442, asparagine 443, and serine 485.

It belongs to the IspH family. Interacts with Fd/ferredoxin. The cofactor is [4Fe-4S] cluster.

The protein localises to the plastid. The protein resides in the apicoplast. The enzyme catalyses dimethylallyl diphosphate + 2 oxidized [2Fe-2S]-[ferredoxin] + H2O = (2E)-4-hydroxy-3-methylbut-2-enyl diphosphate + 2 reduced [2Fe-2S]-[ferredoxin] + 2 H(+). It catalyses the reaction isopentenyl diphosphate + 2 oxidized [2Fe-2S]-[ferredoxin] + H2O = (2E)-4-hydroxy-3-methylbut-2-enyl diphosphate + 2 reduced [2Fe-2S]-[ferredoxin] + 2 H(+). The protein operates within isoprenoid biosynthesis; dimethylallyl diphosphate biosynthesis; dimethylallyl diphosphate from (2E)-4-hydroxy-3-methylbutenyl diphosphate: step 1/1. It functions in the pathway isoprenoid biosynthesis; isopentenyl diphosphate biosynthesis via DXP pathway; isopentenyl diphosphate from 1-deoxy-D-xylulose 5-phosphate: step 6/6. In terms of biological role, catalyzes the conversion of 1-hydroxy-2-methyl-2-(E)-butenyl 4-diphosphate (HMBPP) into a mixture of isopentenyl diphosphate (IPP) and dimethylallyl diphosphate (DMAPP). Acts in the terminal step of the DOXP/MEP pathway for isoprenoid precursor biosynthesis. This is 4-hydroxy-3-methylbut-2-enyl diphosphate reductase, apicoplast from Plasmodium falciparum (isolate 3D7).